The sequence spans 346 residues: Phosphoribosylformylglycinamidine cyclo-ligase (346 aa).

The protein belongs to the AIR synthase family.

The protein resides in the cytoplasm. It catalyses the reaction 2-formamido-N(1)-(5-O-phospho-beta-D-ribosyl)acetamidine + ATP = 5-amino-1-(5-phospho-beta-D-ribosyl)imidazole + ADP + phosphate + H(+). It participates in purine metabolism; IMP biosynthesis via de novo pathway; 5-amino-1-(5-phospho-D-ribosyl)imidazole from N(2)-formyl-N(1)-(5-phospho-D-ribosyl)glycinamide: step 2/2. The sequence is that of Phosphoribosylformylglycinamidine cyclo-ligase from Erwinia tasmaniensis (strain DSM 17950 / CFBP 7177 / CIP 109463 / NCPPB 4357 / Et1/99).